The chain runs to 180 residues: uncharacterized protein (180 aa).

The stretch at 114-147 (EDIYEDIVDVRLENQSLEEQLEDFKECSRALKKY) forms a coiled coil.

This sequence belongs to the mimivirus L74/L77/R857 family.

This is an uncharacterized protein from Acanthamoeba polyphaga mimivirus (APMV).